Consider the following 414-residue polypeptide: Esterase FrsA (414 aa).

This sequence belongs to the FrsA family.

It carries out the reaction a carboxylic ester + H2O = an alcohol + a carboxylate + H(+). Functionally, catalyzes the hydrolysis of esters. This Klebsiella pneumoniae (strain 342) protein is Esterase FrsA.